Here is a 302-residue protein sequence, read N- to C-terminus: Sulfate adenylyltransferase subunit 2 (302 aa).

Belongs to the PAPS reductase family. CysD subfamily. Heterodimer composed of CysD, the smaller subunit, and CysN.

It catalyses the reaction sulfate + ATP + H(+) = adenosine 5'-phosphosulfate + diphosphate. It functions in the pathway sulfur metabolism; hydrogen sulfide biosynthesis; sulfite from sulfate: step 1/3. With CysN forms the ATP sulfurylase (ATPS) that catalyzes the adenylation of sulfate producing adenosine 5'-phosphosulfate (APS) and diphosphate, the first enzymatic step in sulfur assimilation pathway. APS synthesis involves the formation of a high-energy phosphoric-sulfuric acid anhydride bond driven by GTP hydrolysis by CysN coupled to ATP hydrolysis by CysD. This Salmonella paratyphi A (strain AKU_12601) protein is Sulfate adenylyltransferase subunit 2.